A 335-amino-acid chain; its full sequence is Large ribosomal subunit protein uL3 (335 aa).

This sequence belongs to the universal ribosomal protein uL3 family. In terms of assembly, part of the 50S ribosomal subunit. Forms a cluster with proteins L14 and L24e.

Its function is as follows. One of the primary rRNA binding proteins, it binds directly near the 3'-end of the 23S rRNA, where it nucleates assembly of the 50S subunit. This chain is Large ribosomal subunit protein uL3, found in Methanocaldococcus jannaschii (strain ATCC 43067 / DSM 2661 / JAL-1 / JCM 10045 / NBRC 100440) (Methanococcus jannaschii).